Here is a 238-residue protein sequence, read N- to C-terminus: Ubiquitin-conjugating enzyme E2 R2 (238 aa).

The 167-residue stretch at 8–174 (SSQKALMLEL…IRKQVSATKA (167 aa)) folds into the UBC core domain. Catalysis depends on cysteine 93, which acts as the Glycyl thioester intermediate. The interval 98-113 (HPPVDDPQSGELPSER) is important for ubiquitin transfer. The interval 194–238 (TKVPSNDNSSDLLYDDLYDDDIDDEDEEEEDADCYDDDDSGNEES) is disordered. The span at 206–238 (LYDDLYDDDIDDEDEEEEDADCYDDDDSGNEES) shows a compositional bias: acidic residues. Serine 233 carries the phosphoserine; by CK2 modification.

This sequence belongs to the ubiquitin-conjugating enzyme family. As to quaternary structure, interacts with multiple Cul1-RING E3 ubiquitin-protein ligase complexes, also known as SCF (SKP1-CUL1-F-box protein) complexes, including SCF(FBXW7) and SCF(BTRC). Interacts with multiple Cul2-RING (CRL2) E3 ubiquitin-protein ligase complexes, also known as ECS (Elongin BC-CUL2/5-SOCS-box protein) complexes, including CRL2(FEM1C) and ECS(VHL). When phosphorylated, interacts with beta-TrCP (BTRC).

The catalysed reaction is S-ubiquitinyl-[E1 ubiquitin-activating enzyme]-L-cysteine + [E2 ubiquitin-conjugating enzyme]-L-cysteine = [E1 ubiquitin-activating enzyme]-L-cysteine + S-ubiquitinyl-[E2 ubiquitin-conjugating enzyme]-L-cysteine.. Its pathway is protein modification; protein ubiquitination. Its activity is regulated as follows. Neddylation of CUL2 in the CRL2(FEM1C) E3 ligase complex increases substrate affinity of UBE2R2 and the ubiquitin-transfer rate in the E2-E3 complex. In terms of biological role, E2 ubiquitin-conjugating enzyme that accepts ubiquitin from an E1 ubiquitin-activating protein, and catalyzes its covalent attachment to other proteins by an E3 ubiquitin-protein ligase complex. In vitro catalyzes monoubiquitination and 'Lys-48'-linked polyubiquitination. Works in collaboration with various Cul1-RING and Cul2-RING E3 ligase complexes. May be involved in degradation of katenin. The polypeptide is Ubiquitin-conjugating enzyme E2 R2 (UBE2R2) (Homo sapiens (Human)).